Reading from the N-terminus, the 474-residue chain is Ribosomal RNA small subunit methyltransferase F (474 aa).

S-adenosyl-L-methionine is bound by residues 119-125 (AAAPGSK), E143, D170, and D188. The Nucleophile role is filled by C241.

The protein belongs to the class I-like SAM-binding methyltransferase superfamily. RsmB/NOP family.

It is found in the cytoplasm. It carries out the reaction cytidine(1407) in 16S rRNA + S-adenosyl-L-methionine = 5-methylcytidine(1407) in 16S rRNA + S-adenosyl-L-homocysteine + H(+). In terms of biological role, specifically methylates the cytosine at position 1407 (m5C1407) of 16S rRNA. This chain is Ribosomal RNA small subunit methyltransferase F, found in Shewanella oneidensis (strain ATCC 700550 / JCM 31522 / CIP 106686 / LMG 19005 / NCIMB 14063 / MR-1).